A 698-amino-acid polypeptide reads, in one-letter code: Interleukin enhancer-binding factor 3 (698 aa).

The region spanning 5-379 is the DZF domain; that stretch reads RIFLNDDRHV…ALKRPMEEDG (375 aa). Disordered stretches follow at residues 51-88, 374-403, and 473-522; these read QQEK…PTRT, PMEE…PPQA, and EEKE…KHGK. Residues 61–71 show a composition bias toward acidic residues; that stretch reads EQPEPEEPETT. Basic and acidic residues-rich tracts occupy residues 72–81 and 374–384; these read EEGKDSEGKT and PMEEDGEDKSP. A Bipartite nuclear localization signal motif is present at residues 372-390; it reads KRPMEEDGEDKSPSKKKKK. The 70-residue stretch at 399-468 folds into the DRBM 1 domain; it reads EPPQAMNALM…AVKVLQDMGL (70 aa). Over residues 490–503 the composition is skewed to polar residues; sequence TPAQPADSTQTDSA. The DRBM 2 domain occupies 520–586; that stretch reads HGKNPVMELN…ALAALEKLFP (67 aa).

As to quaternary structure, a component of a ybx2/frgy2-containing mRNA-ribonucleoprotein (mRNP) complex. Also a component of the CCAAT box transcription factor (CBTF) complex. Phosphorylated. Phosphorylation affects nuclear translocation. Post-translationally, methylated by protein arginine N-methyltransferase 1 (prmt1b) in the RGG-rich domain. Methylation decreases DNA-binding and thereby decreases transcription of the gata2 gene, but does not regulate dsRNA binding or subcellular localization.

The protein resides in the nucleus. Its subcellular location is the cytoplasm. RNA-binding protein that plays an essential role in the biogenesis of circular RNAs (circRNAs) which are produced by back-splicing circularization of pre-mRNAs. Within the nucleus, promotes circRNAs processing by stabilizing the regulatory elements residing in the flanking introns of the circularized exons. Plays thereby a role in the back-splicing of a subset of circRNAs. As a consequence, participates in a wide range of transcriptional and post-transcriptional processes. Binds to poly-U elements and AU-rich elements (AREs) in the 3'-UTR of target mRNAs. Upon viral infection, ILF3 accumulates in the cytoplasm and participates in the innate antiviral response. Mechanistically, ILF3 becomes phosphorylated and activated by the double-stranded RNA-activated protein kinase/PKR which releases ILF3 from cellular mature circRNAs. In turn, unbound ILF3 molecules are able to interact with and thus inhibit viral mRNAs. Has a cytoplasmic role early in development as part of a ribonucleoprotein (mRNP) complex which may regulate mRNA transport and/or translation. Following nuclear localization at the mid-blastula transition, acts as a transcription factor and binds the 5'-CCAAT-3' promoter sequence to regulate transcription of the gata2 gene as a subunit of the CCAAT box transcription factor (CBTF). Its role as an mRNP component negatively regulates its activity as a transcription factor by precluding its nuclear localization. This chain is Interleukin enhancer-binding factor 3, found in Xenopus tropicalis (Western clawed frog).